The primary structure comprises 521 residues: Zinc finger and BTB domain-containing protein 18 (521 aa).

Positions 24 to 91 constitute a BTB domain; sequence CDCTVLVGDA…MYEGKLQFKD (68 aa). Residues 190-230 form a disordered region; it reads DSASIPQTGGEAETHTAAAGKTADSPCSSTGSLSHRSATSM. The segment covering 197 to 212 has biased composition (low complexity); it reads TGGEAETHTAAAGKTA. The span at 214-230 shows a compositional bias: polar residues; the sequence is SPCSSTGSLSHRSATSM. 4 C2H2-type zinc fingers span residues 369 to 391, 409 to 431, 437 to 459, and 465 to 488; these read FMCP…LSTH, PTCS…ERTH, FTCT…AVVH, and HACK…RKFH.

It belongs to the krueppel C2H2-type zinc-finger protein family. ZBTB18 subfamily.

The protein resides in the nucleus. In terms of biological role, transcriptional repressor that plays a role in various developmental processes. Specifically binds the consensus DNA sequence 5'-[AC]ACATCTG[GT][AC]-3' which contains the E box core, and acts by recruiting chromatin remodeling multiprotein complexes. This chain is Zinc finger and BTB domain-containing protein 18 (zbtb18), found in Xenopus tropicalis (Western clawed frog).